The sequence spans 966 residues: Valine--tRNA ligase (966 aa).

The 'HIGH' region signature appears at 48–58 (PNITGGLHLGH). Positions 348-368 (DYKDARKKIIEECKRLKILED) form a coiled coil. The 'KMSKS' region motif lies at 566 to 570 (KMSKS). Lysine 569 lines the ATP pocket. A coiled-coil region spans residues 939 to 960 (FKKSQEKLNHYNKTKNKLLNQY).

The protein belongs to the class-I aminoacyl-tRNA synthetase family. ValS type 1 subfamily. As to quaternary structure, monomer.

The protein localises to the cytoplasm. It carries out the reaction tRNA(Val) + L-valine + ATP = L-valyl-tRNA(Val) + AMP + diphosphate. In terms of biological role, catalyzes the attachment of valine to tRNA(Val). As ValRS can inadvertently accommodate and process structurally similar amino acids such as threonine, to avoid such errors, it has a 'posttransfer' editing activity that hydrolyzes mischarged Thr-tRNA(Val) in a tRNA-dependent manner. The protein is Valine--tRNA ligase of Blochmanniella floridana.